The following is a 213-amino-acid chain: Leucyl/phenylalanyl-tRNA--protein transferase (213 aa).

The protein belongs to the L/F-transferase family.

The protein localises to the cytoplasm. It carries out the reaction N-terminal L-lysyl-[protein] + L-leucyl-tRNA(Leu) = N-terminal L-leucyl-L-lysyl-[protein] + tRNA(Leu) + H(+). The enzyme catalyses N-terminal L-arginyl-[protein] + L-leucyl-tRNA(Leu) = N-terminal L-leucyl-L-arginyl-[protein] + tRNA(Leu) + H(+). The catalysed reaction is L-phenylalanyl-tRNA(Phe) + an N-terminal L-alpha-aminoacyl-[protein] = an N-terminal L-phenylalanyl-L-alpha-aminoacyl-[protein] + tRNA(Phe). Its function is as follows. Functions in the N-end rule pathway of protein degradation where it conjugates Leu, Phe and, less efficiently, Met from aminoacyl-tRNAs to the N-termini of proteins containing an N-terminal arginine or lysine. The protein is Leucyl/phenylalanyl-tRNA--protein transferase of Rhodospirillum rubrum (strain ATCC 11170 / ATH 1.1.1 / DSM 467 / LMG 4362 / NCIMB 8255 / S1).